We begin with the raw amino-acid sequence, 433 residues long: Oxaloacetate decarboxylase beta chain 2 (433 aa).

The next 10 helical transmembrane spans lie at 16–36, 42–62, 122–142, 168–188, 190–210, 216–236, 266–286, 311–331, 340–360, and 413–433; these read LGAG…LAIA, LLLL…AGMA, VLAL…VIFM, FGIF…LIAF, LPQA…AIYL, PELL…VPLI, ILFP…AAPL, NGLI…KLVA, LGIL…GVLM, and VAGV…VLAM.

The protein belongs to the GcdB/MmdB/OadB family. In terms of assembly, heterotrimer of an alpha, a beta and a gamma subunit. The cofactor is Na(+).

The protein localises to the cell membrane. It carries out the reaction oxaloacetate + 2 Na(+)(in) + H(+) = pyruvate + 2 Na(+)(out) + CO2. Its function is as follows. Catalyzes the decarboxylation of oxaloacetate coupled to Na(+) translocation. This chain is Oxaloacetate decarboxylase beta chain 2 (oadB2), found in Salmonella typhi.